The sequence spans 285 residues: Polyamine aminopropyltransferase (285 aa).

In terms of domain architecture, PABS spans 2 to 237 (DLWFSESHTP…GYWCFGFASK (236 aa)). An S-methyl-5'-thioadenosine-binding site is contributed by glutamine 31. Residue aspartate 86 participates in spermidine binding. S-methyl-5'-thioadenosine contacts are provided by residues glutamate 106 and 137–138 (DG). Residue aspartate 155 is the Proton acceptor of the active site.

It belongs to the spermidine/spermine synthase family. Homodimer or homotetramer.

It localises to the cytoplasm. The enzyme catalyses S-adenosyl 3-(methylsulfanyl)propylamine + putrescine = S-methyl-5'-thioadenosine + spermidine + H(+). The protein operates within amine and polyamine biosynthesis; spermidine biosynthesis; spermidine from putrescine: step 1/1. Catalyzes the irreversible transfer of a propylamine group from the amino donor S-adenosylmethioninamine (decarboxy-AdoMet) to putrescine (1,4-diaminobutane) to yield spermidine. The protein is Polyamine aminopropyltransferase of Streptococcus uberis (strain ATCC BAA-854 / 0140J).